The primary structure comprises 226 residues: Insulin-like growth factor-binding protein 6 (226 aa).

A signal peptide spans 1-25 (MTWDGLPTQPLLMLLMLLFAAGSES). The region spanning 26–99 (ALAGCPGCGP…LIGQGRCQRA (74 aa)) is the IGFBP N-terminal domain. 4 disulfide bridges follow: Cys30–Cys33, Cys49–Cys55, Cys63–Cys76, and Cys70–Cys96. The segment at 92 to 148 (GQGRCQRARGPSEETTKESKPHGGASRPRDRDRQKNPRTSAAPIRPSPVQDGEMGPC) is disordered. The segment covering 101-126 (GPSEETTKESKPHGGASRPRDRDRQK) has biased composition (basic and acidic residues). Residues 145-220 (MGPCRRHLDS…SPDGQGSSQC (76 aa)) enclose the Thyroglobulin type-1 domain. 3 cysteine pairs are disulfide-bonded: Cys148–Cys176, Cys187–Cys198, and Cys200–Cys220. Positions 205–226 (GQPLPVSPDGQGSSQCSARSSG) are disordered. Residues 214-226 (GQGSSQCSARSSG) are compositionally biased toward polar residues.

As to quaternary structure, interacts (via C-terminal domain) with PHB2. O-glycosylated.

It is found in the secreted. IGF-binding proteins prolong the half-life of the IGFs and have been shown to either inhibit or stimulate the growth promoting effects of the IGFs on cell culture. They alter the interaction of IGFs with their cell surface receptors. Activates the MAPK signaling pathway and induces cell migration. The protein is Insulin-like growth factor-binding protein 6 (Igfbp6) of Rattus norvegicus (Rat).